The primary structure comprises 504 residues: Anaerobic nitric oxide reductase transcription regulator NorR (504 aa).

A 4-aspartylphosphate modification is found at Asp57. Residues Met187–Val416 form the Sigma-54 factor interaction domain. Residues Gly215–Glu222 and Ala278–Glu287 each bind ATP. A DNA-binding region (H-T-H motif) is located at residues Trp479–Lys498.

The protein operates within nitrogen metabolism; nitric oxide reduction. Functionally, required for the expression of anaerobic nitric oxide (NO) reductase, acts as a transcriptional activator for at least the norVW operon. Activation also requires sigma-54. The sequence is that of Anaerobic nitric oxide reductase transcription regulator NorR from Escherichia coli (strain ATCC 8739 / DSM 1576 / NBRC 3972 / NCIMB 8545 / WDCM 00012 / Crooks).